Reading from the N-terminus, the 718-residue chain is Sodium/myo-inositol cotransporter (718 aa).

The Extracellular portion of the chain corresponds to 1–9 (MRAVLETAD). The chain crosses the membrane as a helical span at residues 10–29 (IAIVALYFILVMCIGFFAMW). Residues 30 to 38 (KSNRSTVSG) are Cytoplasmic-facing. The helical transmembrane segment at 39 to 57 (YFLAGRSMTWVAIGASLFV) threads the bilayer. Residues 58-86 (SNIGSEHFIGLAGSGAASGFAVGAWEFNA) are Extracellular-facing. The chain crosses the membrane as a helical span at residues 87–110 (LLLLQLLGWVFIPIYIRSGVYTMP). The Cytoplasmic portion of the chain corresponds to 111 to 123 (EYLSKRFGGHRIQ). The chain crosses the membrane as a helical span at residues 124-144 (VYFAALSLILYIFTKLSVDLY). The Extracellular portion of the chain corresponds to 145 to 157 (SGALFIQESMGWN). Residues 158–183 (LYVSVILLIGMTALLTVTGGLVAVIY) form a helical membrane-spanning segment. At 184 to 186 (TDT) the chain is on the cytoplasmic side. The helical transmembrane segment at 187-205 (LQALLMIVGALTLMVISMM) threads the bilayer. Residues 206–303 (EIGGFEEVKR…HAKGSTLMAG (98 aa)) lie on the Extracellular side of the membrane. The N-linked (GlcNAc...) asparagine glycan is linked to asparagine 232. A helical membrane pass occupies residues 304–324 (FLKLLPMFIIVVPGMISRILF). Residues 325 to 353 (ADDIACINPEHCMQVCGSRAGCSNIAYPR) lie on the Cytoplasmic side of the membrane. Residues 354-376 (LVMKLVPVGLRGLMMAVMIAALM) traverse the membrane as a helical segment. Residues 377–406 (SDLDSIFNSASTIFTLDVYKLIRKSASSRE) are Extracellular-facing. A helical membrane pass occupies residues 407-430 (LMIVGRIFVAFMVVISIAWVPIIV). The Cytoplasmic portion of the chain corresponds to 431-443 (EMQGGQMYLYIQE). Residues 444–462 (VADYLTPPVAALFLLAIFW) traverse the membrane as a helical segment. Topologically, residues 463-510 (KRCNEQGAFYGGMAGFILVVVRLTLAFAYRAPECDQPDNRPVFIKDIH) are extracellular. A helical transmembrane segment spans residues 511–532 (YMYVATALFWITGLITVIVSLL). Residues 533–695 (TPPPTKEQIR…QMLEEPPQVK (163 aa)) lie on the Cytoplasmic side of the membrane. Phosphoserine is present on residues serine 594 and serine 632. The chain crosses the membrane as a helical span at residues 696 to 716 (VILNIGLFGVCSLGIFMFVYF). Over 717–718 (SL) the chain is Extracellular.

It belongs to the sodium:solute symporter (SSF) (TC 2.A.21) family. Interacts with KCNQ2 (via the pore module). Interacts with KCNQ1; this interaction is direct. Forms coregulatory complexes with ion channels KCNQ2-KCNQ3 and KCNQ1-KCNE2.

The protein resides in the apical cell membrane. It is found in the basolateral cell membrane. Electrogenic Na(+)-coupled sugar symporter that actively transports myo-inositol and its stereoisomer scyllo-inositol across the plasma membrane, with a Na(+) to sugar coupling ratio of 2:1. Maintains myo-inositol concentration gradient that defines cell volume and fluid balance during osmotic stress, in particular in the fetoplacental unit and central nervous system. Forms coregulatory complexes with voltage-gated K(+) ion channels, allosterically altering ion selectivity, voltage dependence and gating kinetics of the channel. In turn, K(+) efflux through the channel forms a local electrical gradient that modulates electrogenic Na(+)-coupled myo-inositol influx through the transporter. Associates with KCNQ1-KCNE2 channel in the apical membrane of choroid plexus epithelium and regulates the myo-inositol gradient between blood and cerebrospinal fluid with an impact on neuron excitability. Associates with KCNQ2-KCNQ3 channel altering ion selectivity, increasing Na(+) and Cs(+) permeation relative to K(+) permeation. Provides myo-inositol precursor for biosynthesis of phosphoinositides such as PI(4,5)P2, thus indirectly affecting the activity of phosphoinositide-dependent ion channels and Ca(2+) signaling upon osmotic stress. The protein is Sodium/myo-inositol cotransporter (SLC5A3) of Bos taurus (Bovine).